The following is a 388-amino-acid chain: Succinate--CoA ligase [ADP-forming] subunit beta (388 aa).

Residues 9–244 form the ATP-grasp domain; that stretch reads KQLFARYGMP…PSQEDAREAH (236 aa). ATP-binding positions include Lys46, 53 to 55, Glu99, Thr102, and Glu107; that span reads GRG. The Mg(2+) site is built by Asn199 and Asp213. Substrate-binding positions include Asn264 and 321–323; that span reads GIV.

Belongs to the succinate/malate CoA ligase beta subunit family. As to quaternary structure, heterotetramer of two alpha and two beta subunits. Requires Mg(2+) as cofactor.

The catalysed reaction is succinate + ATP + CoA = succinyl-CoA + ADP + phosphate. The enzyme catalyses GTP + succinate + CoA = succinyl-CoA + GDP + phosphate. Its pathway is carbohydrate metabolism; tricarboxylic acid cycle; succinate from succinyl-CoA (ligase route): step 1/1. Functionally, succinyl-CoA synthetase functions in the citric acid cycle (TCA), coupling the hydrolysis of succinyl-CoA to the synthesis of either ATP or GTP and thus represents the only step of substrate-level phosphorylation in the TCA. The beta subunit provides nucleotide specificity of the enzyme and binds the substrate succinate, while the binding sites for coenzyme A and phosphate are found in the alpha subunit. This chain is Succinate--CoA ligase [ADP-forming] subunit beta, found in Yersinia pseudotuberculosis serotype O:1b (strain IP 31758).